The primary structure comprises 192 residues: Thymidylate kinase (192 aa).

Position 7 to 14 (7 to 14 (GVDGVGKS)) interacts with ATP.

This sequence belongs to the thymidylate kinase family.

It carries out the reaction dTMP + ATP = dTDP + ADP. In terms of biological role, phosphorylation of dTMP to form dTDP in both de novo and salvage pathways of dTTP synthesis. This Campylobacter fetus subsp. fetus (strain 82-40) protein is Thymidylate kinase.